Consider the following 430-residue polypeptide: Pre-B-cell leukemia transcription factor 2 (430 aa).

The tract at residues 1 to 52 (MDERLLGPPPPGGGRGGLGLVSGEPGGPGEPPGGGDPGGGSGGVPGGRGKQD) is disordered. A compositionally biased stretch (gly residues) spans 13 to 48 (GGRGGLGLVSGEPGGPGEPPGGGDPGGGSGGVPGGR). The region spanning 48–243 (RGKQDIGDIL…VMILRSRFLD (196 aa)) is the PBC domain. The interval 55-134 (DILQQIMTIT…EGVAGPEKGG (80 aa)) is PBC-A. Ser-136, Ser-151, and Ser-159 each carry phosphoserine. The interval 137 to 243 (AAAAAAAAAS…VMILRSRFLD (107 aa)) is PBC-B. The segment at residues 244–306 (ARRKRRNFSK…NKRIRYKKNI (63 aa)) is a DNA-binding region (homeobox; TALE-type). Disordered regions lie at residues 326-347 (QGGHSRTSSPTPPSSAGSGGSF) and 378-430 (SMGP…DTSN). Phosphoserine is present on Ser-330. The segment covering 380–392 (GPGGYGDNLGGGQ) has biased composition (gly residues). Ser-395 is modified (phosphoserine). The span at 403-418 (GSWQEAVTPSSVTSPT) shows a compositional bias: polar residues.

Belongs to the TALE/PBX homeobox family. Forms heterodimers with MEIS1 and heterotrimers with MEIS1 and HOXA9. Interacts with PBXIP1. As to expression, ubiquitously expressed.

The protein resides in the nucleus. Its function is as follows. Transcriptional activator that binds the sequence 5'-ATCAATCAA-3'. Activates transcription of PF4 in complex with MEIS1. This chain is Pre-B-cell leukemia transcription factor 2 (PBX2), found in Homo sapiens (Human).